A 550-amino-acid chain; its full sequence is Ribosomal protein S6 kinase beta (550 aa).

Residues 83–344 (FQLLKVLGKG…AEEIKSHAFF (262 aa)) enclose the Protein kinase domain. ATP contacts are provided by residues 89-97 (LGKGGYGKV) and K115. The Proton acceptor role is filled by D210. Positions 345–415 (KTTDWNLVYA…VAPSVLEMMN (71 aa)) constitute an AGC-kinase C-terminal domain. T404 is modified (phosphothreonine). Disordered stretches follow at residues 433 to 466 (RAGA…GPNS) and 484 to 550 (TAGG…KRVM). A Phosphoserine modification is found at S439. A compositionally biased stretch (low complexity) spans 520–534 (TTTGNGSTTTTRPSN).

Belongs to the protein kinase superfamily. AGC Ser/Thr protein kinase family. S6 kinase subfamily. It depends on Mg(2+) as a cofactor. In terms of processing, may be phosphorylated on Thr-404 by let-363/TOR.

The protein resides in the cell projection. The protein localises to the axon. It localises to the perikaryon. The catalysed reaction is L-seryl-[protein] + ATP = O-phospho-L-seryl-[protein] + ADP + H(+). It catalyses the reaction L-threonyl-[protein] + ATP = O-phospho-L-threonyl-[protein] + ADP + H(+). In terms of biological role, serine/threonine-protein kinase which regulates mRNA translation. Negatively regulates lifespan and resistance to starvation, oxidative stress, protein aggregation and P.aeruginosa-mediated infection. May regulate these processes by preventing the activation of transcription factor hif-1. Required, probably downstream of let-363/TOR, for the establishment of the proper number of germline progenitors by promoting cell cycle progression and preventing differentiation during larval development. Regulates germ cell size. In addition required for sperm production and embryo viability. Involved in axon regeneration of PLM and ALM neurons by inhibiting growth cone formation early after axotomy and later by inhibiting axon extension. Functions in axon regeneration and lifespan probably by preventing aak-2/AMPK activation. Negatively regulates autophagy. The protein is Ribosomal protein S6 kinase beta of Caenorhabditis elegans.